The chain runs to 266 residues: Apolipoprotein A-I (266 aa).

The N-terminal stretch at 1–18 (MKAVVLTLAVLFLTGSQA) is a signal peptide. 2 consecutive repeat copies span residues 67–88 (LKLL…EQIG) and 89–110 (PVTQ…QEMS). Residues 67–266 (LKLLDNWDSL…DEATKKLNSQ (200 aa)) form a 10 X approximate tandem repeats region. M109 bears the Methionine sulfoxide mark. One copy of the 3; half-length repeat lies at 111–121 (KDLEEVKKKVQ). 5 consecutive repeat copies span residues 122–143 (PYLD…QKVA), 144–165 (PLGA…EKLS), 166–187 (PLAE…AQLA), 188–209 (PYSE…EGGG), and 210–231 (AALT…EKAK). The stretch at 232–242 (PALEDLRQGLL) is one 9; half-length repeat. Repeat unit 10 spans residues 243 to 266 (PVLENFRVSLLAAVDEATKKLNSQ).

It belongs to the apolipoprotein A1/A4/E family. Homodimer. Interacts with APOA1BP and CLU. Component of a sperm activating protein complex (SPAP), consisting of APOA1, an immunoglobulin heavy chain, an immunoglobulin light chain and albumin. Interacts with NDRG1. Interacts with SCGB3A2. Interacts with NAXE and YJEFN3. Glycosylated. Post-translationally, palmitoylated. In terms of processing, phosphorylation sites are present in the extracellular medium.

It is found in the secreted. Functionally, participates in the reverse transport of cholesterol from tissues to the liver for excretion by promoting cholesterol efflux from tissues and by acting as a cofactor for the lecithin cholesterol acyltransferase (LCAT). As part of the SPAP complex, activates spermatozoa motility. The protein is Apolipoprotein A-I (APOA1) of Mirounga angustirostris (Northern elephant seal).